The sequence spans 177 residues: Ribosome maturation factor RimM (177 aa).

One can recognise a PRC barrel domain in the interval 100-177 (EDEYYWSDLV…TVLVAWPSDY (78 aa)).

This sequence belongs to the RimM family. In terms of assembly, binds ribosomal protein uS19.

It is found in the cytoplasm. An accessory protein needed during the final step in the assembly of 30S ribosomal subunit, possibly for assembly of the head region. Essential for efficient processing of 16S rRNA. May be needed both before and after RbfA during the maturation of 16S rRNA. It has affinity for free ribosomal 30S subunits but not for 70S ribosomes. This chain is Ribosome maturation factor RimM, found in Psychrobacter arcticus (strain DSM 17307 / VKM B-2377 / 273-4).